The primary structure comprises 438 residues: Histidinol dehydrogenase (438 aa).

Residues Y135, Q193, and N216 each coordinate NAD(+). S243, Q265, and H268 together coordinate substrate. The Zn(2+) site is built by Q265 and H268. Residues E332 and H333 each act as proton acceptor in the active site. The substrate site is built by H333, D366, E420, and H425. Zn(2+) is bound at residue D366. H425 contributes to the Zn(2+) binding site.

The protein belongs to the histidinol dehydrogenase family. Zn(2+) serves as cofactor.

The catalysed reaction is L-histidinol + 2 NAD(+) + H2O = L-histidine + 2 NADH + 3 H(+). It participates in amino-acid biosynthesis; L-histidine biosynthesis; L-histidine from 5-phospho-alpha-D-ribose 1-diphosphate: step 9/9. Functionally, catalyzes the sequential NAD-dependent oxidations of L-histidinol to L-histidinaldehyde and then to L-histidine. This is Histidinol dehydrogenase from Shewanella oneidensis (strain ATCC 700550 / JCM 31522 / CIP 106686 / LMG 19005 / NCIMB 14063 / MR-1).